We begin with the raw amino-acid sequence, 60 residues long: DNA gyrase inhibitor YacG (60 aa).

Zn(2+) contacts are provided by C15, C18, C30, and C34.

Belongs to the DNA gyrase inhibitor YacG family. Interacts with GyrB. Zn(2+) is required as a cofactor.

Functionally, inhibits all the catalytic activities of DNA gyrase by preventing its interaction with DNA. Acts by binding directly to the C-terminal domain of GyrB, which probably disrupts DNA binding by the gyrase. This Nitrobacter hamburgensis (strain DSM 10229 / NCIMB 13809 / X14) protein is DNA gyrase inhibitor YacG.